Here is a 330-residue protein sequence, read N- to C-terminus: Lipoyl synthase (330 aa).

Residues Cys-55, Cys-60, Cys-66, Cys-81, Cys-85, Cys-88, and Ser-292 each coordinate [4Fe-4S] cluster. In terms of domain architecture, Radical SAM core spans 67-281 (WEDREATFLI…AEEAREIGFV (215 aa)).

Belongs to the radical SAM superfamily. Lipoyl synthase family. It depends on [4Fe-4S] cluster as a cofactor.

The protein localises to the cytoplasm. It catalyses the reaction [[Fe-S] cluster scaffold protein carrying a second [4Fe-4S](2+) cluster] + N(6)-octanoyl-L-lysyl-[protein] + 2 oxidized [2Fe-2S]-[ferredoxin] + 2 S-adenosyl-L-methionine + 4 H(+) = [[Fe-S] cluster scaffold protein] + N(6)-[(R)-dihydrolipoyl]-L-lysyl-[protein] + 4 Fe(3+) + 2 hydrogen sulfide + 2 5'-deoxyadenosine + 2 L-methionine + 2 reduced [2Fe-2S]-[ferredoxin]. It functions in the pathway protein modification; protein lipoylation via endogenous pathway; protein N(6)-(lipoyl)lysine from octanoyl-[acyl-carrier-protein]: step 2/2. Functionally, catalyzes the radical-mediated insertion of two sulfur atoms into the C-6 and C-8 positions of the octanoyl moiety bound to the lipoyl domains of lipoate-dependent enzymes, thereby converting the octanoylated domains into lipoylated derivatives. This is Lipoyl synthase from Cutibacterium acnes (strain DSM 16379 / KPA171202) (Propionibacterium acnes).